We begin with the raw amino-acid sequence, 364 residues long: uncharacterized protein (364 aa).

The segment covering 1–17 (MEPGELMEVDTSQELDE) has biased composition (acidic residues). Positions 1-61 (MEPGELMEVD…EEDQSSTETM (61 aa)) are disordered. The span at 19 to 31 (TSAKETDQPKDAQ) shows a compositional bias: basic and acidic residues.

This is an uncharacterized protein from Caenorhabditis elegans.